The following is a 287-amino-acid chain: uncharacterized protein (287 aa).

Helical transmembrane passes span 7 to 28, 32 to 54, 67 to 86, 91 to 113, 120 to 139, 144 to 163, 170 to 192, 202 to 224, 231 to 253, and 263 to 280; these read LLLT…RAAL, AIDA…AVLL, GWRG…YAYV, GTGA…LLRG, ALLG…LPGA, LGGA…YTLL, PLAV…LLAF, GLAY…WYSA, IQGA…LLLG, and ATLA…PRLG. 2 EamA domains span residues 15–136 and 155–276; these read LAFA…FLLL and LAWG…LILA.

It is found in the cell membrane. This is an uncharacterized protein from Pseudomonas aeruginosa (strain ATCC 15692 / DSM 22644 / CIP 104116 / JCM 14847 / LMG 12228 / 1C / PRS 101 / PAO1).